Here is a 223-residue protein sequence, read N- to C-terminus: Deoxyribose-phosphate aldolase (223 aa).

The active-site Proton donor/acceptor is D91. Residue K153 is the Schiff-base intermediate with acetaldehyde of the active site. K183 serves as the catalytic Proton donor/acceptor.

The protein belongs to the DeoC/FbaB aldolase family. DeoC type 1 subfamily.

It localises to the cytoplasm. The enzyme catalyses 2-deoxy-D-ribose 5-phosphate = D-glyceraldehyde 3-phosphate + acetaldehyde. The protein operates within carbohydrate degradation; 2-deoxy-D-ribose 1-phosphate degradation; D-glyceraldehyde 3-phosphate and acetaldehyde from 2-deoxy-alpha-D-ribose 1-phosphate: step 2/2. Catalyzes a reversible aldol reaction between acetaldehyde and D-glyceraldehyde 3-phosphate to generate 2-deoxy-D-ribose 5-phosphate. The polypeptide is Deoxyribose-phosphate aldolase (Mycoplasmopsis synoviae (strain 53) (Mycoplasma synoviae)).